Consider the following 483-residue polypeptide: Isocitrate dehydrogenase [NADP] (483 aa).

Thr-74 lines the NADP(+) pocket. Ser-83, Asn-85, Arg-89, Arg-99, and Arg-121 together coordinate D-threo-isocitrate. A Mg(2+)-binding site is contributed by Asp-232. Residues 264 to 270 (HGSAPDI) and Asn-277 contribute to the NADP(+) site.

Belongs to the isocitrate and isopropylmalate dehydrogenases family. Homodimer. Mg(2+) serves as cofactor. Requires Mn(2+) as cofactor.

The enzyme catalyses D-threo-isocitrate + NADP(+) = 2-oxoglutarate + CO2 + NADPH. In terms of biological role, catalyzes the oxidative decarboxylation of isocitrate to 2-oxoglutarate and carbon dioxide with the concomitant reduction of NADP(+). This Rickettsia bellii (strain RML369-C) protein is Isocitrate dehydrogenase [NADP] (icd).